The chain runs to 335 residues: Probable cytosolic iron-sulfur protein assembly protein Ciao1 (335 aa).

WD repeat units follow at residues 12–51 (GHKG…WTTK), 57–96 (GHKR…FECN), 101–140 (GHEN…EFEC), 146–185 (PHTQ…SDWD), 192–231 (SHTS…NDAG), 250–289 (QHSR…KRDE), and 301–335 (AHDQ…KMTE).

This sequence belongs to the WD repeat CIA1 family.

Its function is as follows. Essential component of the cytosolic iron-sulfur (Fe/S) protein assembly machinery. Required for the maturation of extramitochondrial Fe/S proteins. This is Probable cytosolic iron-sulfur protein assembly protein Ciao1 from Drosophila ananassae (Fruit fly).